The sequence spans 245 residues: 4-hydroxy-tetrahydrodipicolinate reductase (245 aa).

NAD(+) is bound by residues 7-12 (GAKGKV), 75-77 (GTT), and 102-105 (APNF). His132 serves as the catalytic Proton donor/acceptor. His133 is a (S)-2,3,4,5-tetrahydrodipicolinate binding site. Lys136 (proton donor) is an active-site residue. 142-143 (GT) contributes to the (S)-2,3,4,5-tetrahydrodipicolinate binding site.

The protein belongs to the DapB family.

It localises to the cytoplasm. The enzyme catalyses (S)-2,3,4,5-tetrahydrodipicolinate + NAD(+) + H2O = (2S,4S)-4-hydroxy-2,3,4,5-tetrahydrodipicolinate + NADH + H(+). It catalyses the reaction (S)-2,3,4,5-tetrahydrodipicolinate + NADP(+) + H2O = (2S,4S)-4-hydroxy-2,3,4,5-tetrahydrodipicolinate + NADPH + H(+). It functions in the pathway amino-acid biosynthesis; L-lysine biosynthesis via DAP pathway; (S)-tetrahydrodipicolinate from L-aspartate: step 4/4. Its function is as follows. Catalyzes the conversion of 4-hydroxy-tetrahydrodipicolinate (HTPA) to tetrahydrodipicolinate. This Mycobacterium sp. (strain JLS) protein is 4-hydroxy-tetrahydrodipicolinate reductase.